A 158-amino-acid polypeptide reads, in one-letter code: C-type lectin (158 aa).

An N-terminal signal peptide occupies residues methionine 1–glycine 23. 3 cysteine pairs are disulfide-bonded: cysteine 26–cysteine 37, cysteine 54–cysteine 154, and cysteine 129–cysteine 146. The region spanning arginine 33–glutamine 155 is the C-type lectin domain. Positions glutamate 119 to asparagine 121 match the Mannose-binding motif. Ca(2+) is bound by residues glutamate 127, asparagine 142, and aspartate 143.

It belongs to the true venom lectin family. As to expression, expressed by the venom gland.

It is found in the secreted. In terms of biological role, mannose-binding lectin which recognizes specific carbohydrate structures and agglutinates a variety of animal cells by binding to cell-surface glycoproteins and glycolipids. May be a calcium-dependent lectin. This is C-type lectin from Cerberus rynchops (Dog-faced water snake).